We begin with the raw amino-acid sequence, 234 residues long: Ribonuclease HII (234 aa).

The region spanning 47-234 is the RNase H type-2 domain; that stretch reads IRIAGVDEVG…KTVHKILYQE (188 aa). 3 residues coordinate a divalent metal cation: Asp-53, Glu-54, and Asp-144.

This sequence belongs to the RNase HII family. It depends on Mn(2+) as a cofactor. Requires Mg(2+) as cofactor.

It localises to the cytoplasm. It catalyses the reaction Endonucleolytic cleavage to 5'-phosphomonoester.. Endonuclease that specifically degrades the RNA of RNA-DNA hybrids. The chain is Ribonuclease HII from Ruegeria pomeroyi (strain ATCC 700808 / DSM 15171 / DSS-3) (Silicibacter pomeroyi).